The following is a 261-amino-acid chain: Putative ankyrin repeat protein L99 (261 aa).

ANK repeat units lie at residues 21-50 (KVNP…DVHA), 51-80 (HEDY…NIHS), 81-110 (DRDL…NVNA), 112-140 (QNSA…NIHA), 142-170 (NNFC…DINA), 171-203 (DNGA…IDNC), and 231-259 (NELK…NINS).

In Acanthamoeba polyphaga (Amoeba), this protein is Putative ankyrin repeat protein L99.